An 83-amino-acid chain; its full sequence is Mu-theraphotoxin-Hhn2c (83 aa).

The signal sequence occupies residues 1 to 21 (MKASMFLALAGLVLLFVVGYA). Positions 22–48 (SESEEKEFPIELLSKIFAVDVFKGEER) are excised as a propeptide. 3 disulfide bridges follow: Cys-50-Cys-65, Cys-57-Cys-70, and Cys-64-Cys-77. Position 81 is a leucine amide (Leu-81).

This sequence belongs to the neurotoxin 10 (Hwtx-1) family. 15 (Hntx-3) subfamily. In terms of assembly, monomer. As to expression, expressed by the venom gland.

It localises to the secreted. Functionally, lethal neurotoxin. Selectively blocks tetrodotoxin-sensitive voltage-gated sodium channels (Nav). Does not affect tetrodotoxin-resistant voltage-gated sodium channels or calcium channels. In Cyriopagopus hainanus (Chinese bird spider), this protein is Mu-theraphotoxin-Hhn2c.